The following is a 284-amino-acid chain: Diaminopimelate epimerase (284 aa).

3 residues coordinate substrate: N21, Q54, and N74. Catalysis depends on C83, which acts as the Proton donor. Substrate is bound by residues 84 to 85 (GN), N167, N200, and 218 to 219 (ER). C227 acts as the Proton acceptor in catalysis. 228–229 (GS) lines the substrate pocket.

This sequence belongs to the diaminopimelate epimerase family. Homodimer.

The protein localises to the cytoplasm. It catalyses the reaction (2S,6S)-2,6-diaminopimelate = meso-2,6-diaminopimelate. The protein operates within amino-acid biosynthesis; L-lysine biosynthesis via DAP pathway; DL-2,6-diaminopimelate from LL-2,6-diaminopimelate: step 1/1. Functionally, catalyzes the stereoinversion of LL-2,6-diaminopimelate (L,L-DAP) to meso-diaminopimelate (meso-DAP), a precursor of L-lysine and an essential component of the bacterial peptidoglycan. This Buchnera aphidicola subsp. Acyrthosiphon pisum (strain APS) (Acyrthosiphon pisum symbiotic bacterium) protein is Diaminopimelate epimerase.